A 405-amino-acid chain; its full sequence is Imidazolonepropionase (405 aa).

The Fe(3+) site is built by H73 and H75. Residues H73 and H75 each coordinate Zn(2+). Residues R82, Y145, and H178 each coordinate 4-imidazolone-5-propanoate. Y145 contributes to the N-formimidoyl-L-glutamate binding site. H243 is a Fe(3+) binding site. Zn(2+) is bound at residue H243. Q246 lines the 4-imidazolone-5-propanoate pocket. D318 lines the Fe(3+) pocket. D318 contributes to the Zn(2+) binding site. N-formimidoyl-L-glutamate is bound by residues N320 and G322. A 4-imidazolone-5-propanoate-binding site is contributed by T323.

It belongs to the metallo-dependent hydrolases superfamily. HutI family. Zn(2+) serves as cofactor. The cofactor is Fe(3+).

It localises to the cytoplasm. The enzyme catalyses 4-imidazolone-5-propanoate + H2O = N-formimidoyl-L-glutamate. It functions in the pathway amino-acid degradation; L-histidine degradation into L-glutamate; N-formimidoyl-L-glutamate from L-histidine: step 3/3. Its function is as follows. Catalyzes the hydrolytic cleavage of the carbon-nitrogen bond in imidazolone-5-propanoate to yield N-formimidoyl-L-glutamate. It is the third step in the universal histidine degradation pathway. In Brucella abortus (strain S19), this protein is Imidazolonepropionase.